The following is a 236-amino-acid chain: uncharacterized protein (236 aa).

7 consecutive transmembrane segments (helical) span residues 32–52, 61–81, 90–110, 115–135, 144–164, 167–187, and 208–228; these read MALA…VEPI, FGTI…MGFG, ILFW…ALIY, IART…YGYS, GSFF…NLFL, SSLS…LIAW, and LSIM…LYLM.

Belongs to the BI1 family.

It localises to the cell membrane. This is an uncharacterized protein from Rickettsia prowazekii (strain Madrid E).